Reading from the N-terminus, the 832-residue chain is Golgin subfamily A member 6-like protein 24 (832 aa).

5 disordered regions span residues 1–107, 303–333, 351–431, 508–652, and 664–832; these read MWPQ…QEAL, QEQEEKIREQEEKMRRQEEMMWEKEEKMRRQ, MHEQ…EMWR, QEEM…EQEE, and QEEM…MQEH. The span at 13–27 shows a compositional bias: basic residues; sequence LPTHPHLPTHPHLPT. Over residues 37 to 58 the composition is skewed to basic and acidic residues; that stretch reads MSKETRQSKLAEAKEQLTDHHP. 2 stretches are compositionally biased toward polar residues: residues 59 to 69 and 77 to 89; these read QTNPSVGTAAS and NNGTNPETTTSGG. Basic and acidic residues predominate over residues 92–107; it reads SPEDEQKASHQHQEAL. The stretch at 163-828 forms a coiled coil; the sequence is LEQALSAVAT…EVRLRQQEEK (666 aa). Basic and acidic residues-rich tracts occupy residues 664-684 and 692-832; these read QEEMMQEQEEKMGEQEEKMWE and QEEK…MQEH.

It belongs to the GOLGA6 family.

This Homo sapiens (Human) protein is Golgin subfamily A member 6-like protein 24.